Reading from the N-terminus, the 119-residue chain is Large ribosomal subunit protein bL20 (119 aa).

Belongs to the bacterial ribosomal protein bL20 family.

Functionally, binds directly to 23S ribosomal RNA and is necessary for the in vitro assembly process of the 50S ribosomal subunit. It is not involved in the protein synthesizing functions of that subunit. The protein is Large ribosomal subunit protein bL20 of Xanthomonas campestris pv. campestris (strain 8004).